The following is a 188-amino-acid chain: Calcium load-activated calcium channel (188 aa).

Over 1–4 (MSTM) the chain is Lumenal. The chain crosses the membrane as a helical span at residues 5–32 (FADTLLIVFISVCTALLAEGITWVLVYR). Positions 32-89 (RTDKYKRLKAEVEKQSKKLEKKKETITESAGRQQKKKIERQEEKLKNNNRDLSMVRMK) form a coiled coil. Residues 33 to 86 (TDKYKRLKAEVEKQSKKLEKKKETITESAGRQQKKKIERQEEKLKNNNRDLSMV) are Cytoplasmic-facing. Phosphoserine is present on Ser-60. Residues 87–106 (RMKSMFAIGFCFTALMGMFN) traverse the membrane as a helical segment. The Lumenal segment spans residues 107-120 (SIFDGRVVAKLPFT). The stretch at 121–130 (PLSYIQGLSH) is an intramembrane region. Residues 131 to 140 (RNLLGDDTTD) lie on the Lumenal side of the membrane. Residues 141-162 (CSFIFLYILCTMSIRQNIQKIL) traverse the membrane as a helical segment. Over 163–188 (GLAPSRAATKQAGGFLGPPPPSGKFS) the chain is Cytoplasmic. At Ser-188 the chain carries Phosphoserine.

The protein belongs to the TMCO1 family. As to quaternary structure, homodimer and homotetramer. Homodimer under resting conditions; forms homotetramers following ER calcium overload. Component of the GET- and EMC-like (GEL) complex, composed of RAB5IF/OPTI and TMCO1. The GEL complex is part of the multi-pass translocon (MPT) complex, composed of three subcomplexes, the GEL complex (composed of RAB5IF/OPTI and TMCO1), the BOS complex (composed of NCLN/Nicalin, NOMO1 and TMEM147) and the PAT complex (composed of WDR83OS/Asterix and CCDC47). The MPT complex associates with the SEC61 complex.

The protein resides in the endoplasmic reticulum membrane. Its subcellular location is the golgi apparatus membrane. The protein localises to the mitochondrion membrane. It carries out the reaction Ca(2+)(in) = Ca(2+)(out). Functionally, endoplasmic reticulum (ER) calcium-selective channel preventing intracellular Ca2(+) stores from overfilling and maintaining calcium homeostasis in the ER. In response to endoplasmic reticulum (ER) Ca2(+) overloading, assembles into a homotetramer, forming a functional calcium-selective channel facilitating Ca2(+) release. Mediates ER Ca2(+) homeostasis in osteoblasts and plays a key role in bone formation, via the CaMKII-HDAC4-RUNX2 signaling axis. Component of the multi-pass translocon (MPT) complex that mediates insertion of multi-pass membrane proteins into the lipid bilayer of membranes. The MPT complex takes over after the SEC61 complex: following membrane insertion of the first few transmembrane segments of proteins by the SEC61 complex, the MPT complex occludes the lateral gate of the SEC61 complex to promote insertion of subsequent transmembrane regions. Within the MPT complex, the GEL subcomplex may mediate insertion of transmembrane regions into the membrane. The chain is Calcium load-activated calcium channel from Bos taurus (Bovine).